The sequence spans 104 residues: NADH-quinone oxidoreductase subunit K (104 aa).

The next 3 membrane-spanning stretches (helical) occupy residues V4 to A24, V31 to F51, and I64 to L84.

Belongs to the complex I subunit 4L family. As to quaternary structure, NDH-1 is composed of 14 different subunits. Subunits NuoA, H, J, K, L, M, N constitute the membrane sector of the complex.

The protein localises to the cell membrane. The enzyme catalyses a quinone + NADH + 5 H(+)(in) = a quinol + NAD(+) + 4 H(+)(out). Functionally, NDH-1 shuttles electrons from NADH, via FMN and iron-sulfur (Fe-S) centers, to quinones in the respiratory chain. The immediate electron acceptor for the enzyme in this species is believed to be a menaquinone. Couples the redox reaction to proton translocation (for every two electrons transferred, four hydrogen ions are translocated across the cytoplasmic membrane), and thus conserves the redox energy in a proton gradient. The sequence is that of NADH-quinone oxidoreductase subunit K from Geobacillus sp. (strain WCH70).